The sequence spans 159 residues: 17 kDa surface antigen (159 aa).

A signal peptide spans 1 to 19; the sequence is MKLLSKIMIIALATSMLQA. The N-palmitoyl cysteine moiety is linked to residue Cys-20. The S-diacylglycerol cysteine moiety is linked to residue Cys-20.

The protein belongs to the rickettsiale 17 kDa surface antigen family.

It is found in the cell outer membrane. This Rickettsia conorii (strain ATCC VR-613 / Malish 7) protein is 17 kDa surface antigen (omp).